The sequence spans 118 residues: uncharacterized protein (118 aa).

A disordered region spans residues 1-49; that stretch reads MDYVGGSLKLKNVKKKPLKKKKKDSKKLAEKVQEHSSRDKSPLEENGVS. A compositionally biased stretch (basic residues) spans 11–25; that stretch reads KNVKKKPLKKKKKDS. Over residues 26 to 43 the composition is skewed to basic and acidic residues; that stretch reads KKLAEKVQEHSSRDKSPL.

This is an uncharacterized protein from Schizosaccharomyces pombe (strain 972 / ATCC 24843) (Fission yeast).